A 122-amino-acid chain; its full sequence is Large ribosomal subunit protein uL18 (122 aa).

Residues 1–27 (MATLSKKQQTQKRHKRLRRHLNGTNHR) form a disordered region. A compositionally biased stretch (basic residues) spans 9-27 (QTQKRHKRLRRHLNGTNHR).

The protein belongs to the universal ribosomal protein uL18 family. In terms of assembly, part of the 50S ribosomal subunit; part of the 5S rRNA/L5/L18/L25 subcomplex. Contacts the 5S and 23S rRNAs.

Its function is as follows. This is one of the proteins that bind and probably mediate the attachment of the 5S RNA into the large ribosomal subunit, where it forms part of the central protuberance. The sequence is that of Large ribosomal subunit protein uL18 from Prochlorococcus marinus (strain MIT 9211).